We begin with the raw amino-acid sequence, 211 residues long: 3-demethoxyubiquinol 3-hydroxylase (211 aa).

The Fe cation site is built by Glu60, Glu90, His93, Glu142, Glu174, and His177.

This sequence belongs to the COQ7 family. Fe cation serves as cofactor.

Its subcellular location is the cell membrane. It catalyses the reaction a 5-methoxy-2-methyl-3-(all-trans-polyprenyl)benzene-1,4-diol + AH2 + O2 = a 3-demethylubiquinol + A + H2O. It functions in the pathway cofactor biosynthesis; ubiquinone biosynthesis. Catalyzes the hydroxylation of 2-nonaprenyl-3-methyl-6-methoxy-1,4-benzoquinol during ubiquinone biosynthesis. The sequence is that of 3-demethoxyubiquinol 3-hydroxylase from Francisella tularensis subsp. tularensis (strain FSC 198).